A 91-amino-acid polypeptide reads, in one-letter code: Small ribosomal subunit protein uS19m (91 aa).

This sequence belongs to the universal ribosomal protein uS19 family. In terms of assembly, component of the mitochondrial small ribosomal subunit (mt-SSU). Mature yeast 74S mitochondrial ribosomes consist of a small (37S) and a large (54S) subunit. The 37S small subunit contains a 15S ribosomal RNA (15S mt-rRNA) and 34 different proteins. The 54S large subunit contains a 21S rRNA (21S mt-rRNA) and 46 different proteins.

Its subcellular location is the mitochondrion. Component of the mitochondrial ribosome (mitoribosome), a dedicated translation machinery responsible for the synthesis of mitochondrial genome-encoded proteins, including at least some of the essential transmembrane subunits of the mitochondrial respiratory chain. The mitoribosomes are attached to the mitochondrial inner membrane and translation products are cotranslationally integrated into the membrane. This chain is Small ribosomal subunit protein uS19m (RSM19), found in Saccharomyces cerevisiae (strain ATCC 204508 / S288c) (Baker's yeast).